We begin with the raw amino-acid sequence, 373 residues long: tRNA N6-adenosine threonylcarbamoyltransferase (373 aa).

3 residues coordinate a divalent metal cation: histidine 128, histidine 132, and tyrosine 149. Residues 149 to 153, aspartate 181, glycine 196, glutamate 200, and asparagine 302 contribute to the substrate site; that span reads YVSGG. A divalent metal cation is bound at residue aspartate 331.

This sequence belongs to the KAE1 / TsaD family. Component of the EKC/KEOPS complex composed of at least BUD32, CGI121, GON7, KAE1 and PCC1; the whole complex dimerizes. Requires a divalent metal cation as cofactor.

It is found in the cytoplasm. It localises to the nucleus. It catalyses the reaction L-threonylcarbamoyladenylate + adenosine(37) in tRNA = N(6)-L-threonylcarbamoyladenosine(37) in tRNA + AMP + H(+). Functionally, component of the EKC/KEOPS complex that is required for the formation of a threonylcarbamoyl group on adenosine at position 37 (t(6)A37) in tRNAs that read codons beginning with adenine. The complex is probably involved in the transfer of the threonylcarbamoyl moiety of threonylcarbamoyl-AMP (TC-AMP) to the N6 group of A37. KAE1 likely plays a direct catalytic role in this reaction, but requires other protein(s) of the complex to fulfill this activity. The EKC/KEOPS complex also promotes both telomere uncapping and telomere elongation. The complex is required for efficient recruitment of transcriptional coactivators. This chain is tRNA N6-adenosine threonylcarbamoyltransferase, found in Candida glabrata (strain ATCC 2001 / BCRC 20586 / JCM 3761 / NBRC 0622 / NRRL Y-65 / CBS 138) (Yeast).